Here is a 54-residue protein sequence, read N- to C-terminus: Large ribosomal subunit protein bL33 (54 aa).

This sequence belongs to the bacterial ribosomal protein bL33 family.

This chain is Large ribosomal subunit protein bL33, found in Corynebacterium efficiens (strain DSM 44549 / YS-314 / AJ 12310 / JCM 11189 / NBRC 100395).